Reading from the N-terminus, the 299-residue chain is 5,10-dihydrophenazine-1-carboxylate 9-dimethylallyltransferase (299 aa).

The protein belongs to the aromatic prenyltransferase family.

The catalysed reaction is 5,10-dihydrophenazine 1-carboxylate + dimethylallyl diphosphate = 5,10-dihydro-9-dimethylallylphenazine 1-carboxylate + diphosphate. The protein operates within antibiotic biosynthesis; phenazine biosynthesis. Does not require magnesium or any other divalent metal ions for activity. Its function is as follows. Involved in the biosynthesis of prenylated phenazines. Catalyzes the transfer of a dimethylallyl moiety to C-9 of 5,10-dihydrophenazine 1-carboxylate (dihydro-PCA). Specific for both dimethylallyl diphosphate and dihydro-PCA. This is 5,10-dihydrophenazine-1-carboxylate 9-dimethylallyltransferase from Streptomyces anulatus (Streptomyces chrysomallus).